The primary structure comprises 204 residues: Large ribosomal subunit protein eL15A (204 aa).

The disordered stretch occupies residues 164 to 185 (LTATGKKSRGINKGHKFNNTKA). Over residues 169–185 (KKSRGINKGHKFNNTKA) the composition is skewed to basic residues.

Belongs to the eukaryotic ribosomal protein eL15 family. In terms of assembly, component of the large ribosomal subunit (LSU). Mature yeast ribosomes consist of a small (40S) and a large (60S) subunit. The 40S small subunit contains 1 molecule of ribosomal RNA (18S rRNA) and 33 different proteins (encoded by 57 genes). The large 60S subunit contains 3 rRNA molecules (25S, 5.8S and 5S rRNA) and 46 different proteins (encoded by 81 genes).

Its subcellular location is the cytoplasm. Component of the ribosome, a large ribonucleoprotein complex responsible for the synthesis of proteins in the cell. The small ribosomal subunit (SSU) binds messenger RNAs (mRNAs) and translates the encoded message by selecting cognate aminoacyl-transfer RNA (tRNA) molecules. The large subunit (LSU) contains the ribosomal catalytic site termed the peptidyl transferase center (PTC), which catalyzes the formation of peptide bonds, thereby polymerizing the amino acids delivered by tRNAs into a polypeptide chain. The nascent polypeptides leave the ribosome through a tunnel in the LSU and interact with protein factors that function in enzymatic processing, targeting, and the membrane insertion of nascent chains at the exit of the ribosomal tunnel. The polypeptide is Large ribosomal subunit protein eL15A (Saccharomyces cerevisiae (strain ATCC 204508 / S288c) (Baker's yeast)).